Reading from the N-terminus, the 49-residue chain is Protein YlcJ (49 aa).

The first 21 residues, 1 to 21, serve as a signal peptide directing secretion; sequence MSLVLCFLLMSLFFMYSFVLS.

This Escherichia coli (strain K12) protein is Protein YlcJ.